We begin with the raw amino-acid sequence, 453 residues long: Chromosomal replication initiator protein DnaA (453 aa).

The tract at residues 1–74 is domain I, interacts with DnaA modulators; sequence MKEKQFWNRI…GFEIYDAEIT (74 aa). The segment at 74–113 is domain II; the sequence is TPHYIFTKPQDTTSSQVEEATNLTLYNYSPKLVSIPYSDT. The domain III, AAA+ region stretch occupies residues 114–331; that stretch reads GLKEKYTFDN…GAINDITLIA (218 aa). Residues G158, G160, K161, and T162 each contribute to the ATP site. The tract at residues 332 to 453 is domain IV, binds dsDNA; it reads RVKKIKDITI…EIESIKKKIK (122 aa).

Belongs to the DnaA family. In terms of assembly, oligomerizes as a right-handed, spiral filament on DNA at oriC.

Its subcellular location is the cytoplasm. Its function is as follows. Plays an essential role in the initiation and regulation of chromosomal replication. ATP-DnaA binds to the origin of replication (oriC) to initiate formation of the DNA replication initiation complex once per cell cycle. Binds the DnaA box (a 9 base pair repeat at the origin) and separates the double-stranded (ds)DNA. Forms a right-handed helical filament on oriC DNA; dsDNA binds to the exterior of the filament while single-stranded (ss)DNA is stabiized in the filament's interior. The ATP-DnaA-oriC complex binds and stabilizes one strand of the AT-rich DNA unwinding element (DUE), permitting loading of DNA polymerase. After initiation quickly degrades to an ADP-DnaA complex that is not apt for DNA replication. Binds acidic phospholipids. The protein is Chromosomal replication initiator protein DnaA of Streptococcus pneumoniae serotype 19F (strain G54).